We begin with the raw amino-acid sequence, 189 residues long: Elongation factor P (189 aa).

Position 34 is an N6-(3,6-diaminohexanoyl)-5-hydroxylysine (lysine 34).

This sequence belongs to the elongation factor P family. In terms of processing, may be beta-lysylated on the epsilon-amino group of Lys-34 by the combined action of EpmA and EpmB, and then hydroxylated on the C5 position of the same residue by EpmC (if this protein is present). Lysylation is critical for the stimulatory effect of EF-P on peptide-bond formation. The lysylation moiety may extend toward the peptidyltransferase center and stabilize the terminal 3-CCA end of the tRNA. Hydroxylation of the C5 position on Lys-34 may allow additional potential stabilizing hydrogen-bond interactions with the P-tRNA.

The protein localises to the cytoplasm. It functions in the pathway protein biosynthesis; polypeptide chain elongation. Functionally, involved in peptide bond synthesis. Alleviates ribosome stalling that occurs when 3 or more consecutive Pro residues or the sequence PPG is present in a protein, possibly by augmenting the peptidyl transferase activity of the ribosome. Modification of Lys-34 is required for alleviation. The sequence is that of Elongation factor P from Alkalilimnicola ehrlichii (strain ATCC BAA-1101 / DSM 17681 / MLHE-1).